A 199-amino-acid polypeptide reads, in one-letter code: Extracellular superoxide dismutase [Cu-Zn] (199 aa).

Residues 1-20 (MMIASFAIFLSHIIFITYAT) form the signal peptide. Residues Asn-33, Asn-60, and Asn-70 are each glycosylated (N-linked (GlcNAc...) asparagine). Positions 89, 91, and 106 each coordinate Cu cation. Cys-100 and Cys-192 are joined by a disulfide. A Zn(2+)-binding site is contributed by His-106. The N-linked (GlcNAc...) asparagine glycan is linked to Asn-111. Residues His-114, His-123, and Asp-126 each contribute to the Zn(2+) site. Residue His-163 participates in Cu cation binding.

Belongs to the Cu-Zn superoxide dismutase family. In terms of assembly, homodimer. The cofactor is Cu cation. It depends on Zn(2+) as a cofactor.

It localises to the secreted. It is found in the extracellular space. The enzyme catalyses 2 superoxide + 2 H(+) = H2O2 + O2. Its function is as follows. Protect the extracellular space from toxic effect of reactive oxygen intermediates by converting superoxide radicals into hydrogen peroxide and oxygen. May act in the parasite defense by neutralizing superoxide generated by activated leukocytes, thus acting as both an antioxidant and an anti-inflammatory factor. The sequence is that of Extracellular superoxide dismutase [Cu-Zn] from Brugia pahangi (Filarial nematode worm).